Consider the following 417-residue polypeptide: D-amino acid dehydrogenase (417 aa).

Residue 3–17 coordinates FAD; that stretch reads VVILGSGVVGVSTAW.

The protein belongs to the DadA oxidoreductase family. It depends on FAD as a cofactor.

The enzyme catalyses a D-alpha-amino acid + A + H2O = a 2-oxocarboxylate + AH2 + NH4(+). It functions in the pathway amino-acid degradation; D-alanine degradation; NH(3) and pyruvate from D-alanine: step 1/1. Its function is as follows. Oxidative deamination of D-amino acids. This Pectobacterium atrosepticum (strain SCRI 1043 / ATCC BAA-672) (Erwinia carotovora subsp. atroseptica) protein is D-amino acid dehydrogenase.